Reading from the N-terminus, the 91-residue chain is Small ribosomal subunit protein bS16 (91 aa).

The protein belongs to the bacterial ribosomal protein bS16 family. As to quaternary structure, part of the 30S ribosomal subunit.

Its function is as follows. Binds to the lower part of the body of the 30S subunit, where it stabilizes two of its domains. The chain is Small ribosomal subunit protein bS16 from Thermus thermophilus.